Reading from the N-terminus, the 358-residue chain is UDP-N-acetylglucosamine--N-acetylmuramyl-(pentapeptide) pyrophosphoryl-undecaprenol N-acetylglucosamine transferase (358 aa).

Residues 11–13, N120, R161, S188, and Q282 each bind UDP-N-acetyl-alpha-D-glucosamine; that span reads TGG.

This sequence belongs to the glycosyltransferase 28 family. MurG subfamily.

The protein resides in the cell inner membrane. The enzyme catalyses di-trans,octa-cis-undecaprenyl diphospho-N-acetyl-alpha-D-muramoyl-L-alanyl-D-glutamyl-meso-2,6-diaminopimeloyl-D-alanyl-D-alanine + UDP-N-acetyl-alpha-D-glucosamine = di-trans,octa-cis-undecaprenyl diphospho-[N-acetyl-alpha-D-glucosaminyl-(1-&gt;4)]-N-acetyl-alpha-D-muramoyl-L-alanyl-D-glutamyl-meso-2,6-diaminopimeloyl-D-alanyl-D-alanine + UDP + H(+). Its pathway is cell wall biogenesis; peptidoglycan biosynthesis. Functionally, cell wall formation. Catalyzes the transfer of a GlcNAc subunit on undecaprenyl-pyrophosphoryl-MurNAc-pentapeptide (lipid intermediate I) to form undecaprenyl-pyrophosphoryl-MurNAc-(pentapeptide)GlcNAc (lipid intermediate II). The polypeptide is UDP-N-acetylglucosamine--N-acetylmuramyl-(pentapeptide) pyrophosphoryl-undecaprenol N-acetylglucosamine transferase (Synechococcus sp. (strain WH7803)).